We begin with the raw amino-acid sequence, 185 residues long: Protein GrpE (185 aa).

A disordered region spans residues 1–40; that stretch reads MSEEKKDEILEQETVETKEEIKTEEAEQKTESLEEKVARL.

The protein belongs to the GrpE family. Homodimer.

The protein resides in the cytoplasm. Its function is as follows. Participates actively in the response to hyperosmotic and heat shock by preventing the aggregation of stress-denatured proteins, in association with DnaK and GrpE. It is the nucleotide exchange factor for DnaK and may function as a thermosensor. Unfolded proteins bind initially to DnaJ; upon interaction with the DnaJ-bound protein, DnaK hydrolyzes its bound ATP, resulting in the formation of a stable complex. GrpE releases ADP from DnaK; ATP binding to DnaK triggers the release of the substrate protein, thus completing the reaction cycle. Several rounds of ATP-dependent interactions between DnaJ, DnaK and GrpE are required for fully efficient folding. This is Protein GrpE from Aliarcobacter butzleri (strain RM4018) (Arcobacter butzleri).